We begin with the raw amino-acid sequence, 302 residues long: Deoxyhypusine hydroxylase (302 aa).

Met-1 is subject to N-acetylmethionine. HEAT-like PBS-type repeat units lie at residues Leu-54–Asp-80, Val-87–Asp-113, Glu-174–Cys-200, Phe-205–Arg-231, and Val-238–Asp-264. Fe cation contacts are provided by His-56, His-89, and Glu-90. His-207, His-240, and Glu-241 together coordinate Fe cation.

This sequence belongs to the deoxyhypusine hydroxylase family. Requires Fe(2+) as cofactor.

It carries out the reaction [eIF5A protein]-deoxyhypusine + AH2 + O2 = [eIF5A protein]-hypusine + A + H2O. It functions in the pathway protein modification; eIF5A hypusination. In terms of biological role, catalyzes the hydroxylation of the N(6)-(4-aminobutyl)-L-lysine intermediate produced by deoxyhypusine synthase/DHPS on a critical lysine of the eukaryotic translation initiation factor 5A/eIF-5A. This is the second step of the post-translational modification of that lysine into an unusual amino acid residue named hypusine. Hypusination is unique to mature eIF-5A factor and is essential for its function. This chain is Deoxyhypusine hydroxylase, found in Homo sapiens (Human).